The primary structure comprises 1158 residues: Serine/threonine/tyrosine-interacting-like protein 2 (1158 aa).

Disordered stretches follow at residues 1 to 21 (MATRKDTEEEQVVPSEEDEAN), 280 to 303 (EEREEDYGREGGSAEAEEGEGTGS), 315 to 337 (EEEDDSASHLSGSSLGKATQASK), 360 to 392 (LLSDKVPQDGGGWRSASSGQGGEELEDEDVERI), 407 to 444 (GYRRWGREEEKEEESDAGSSVGRRRRTLSESSAWESVS), 492 to 527 (SRRYHAKSKREEAADRSSEAGSRVREDDEDSVGSEA), 559 to 582 (KDLGAGDSSGEPGAEEAVGEKNPS), 597 to 622 (QKKVGSENKEEVVELSKGEDSALAKK), 873 to 915 (KVKE…CSSL), and 940 to 1135 (SGLR…MDDE). Positions 8-19 (EEEQVVPSEEDE) are enriched in acidic residues. The Tyrosine-protein phosphatase domain occupies 132–280 (NEVDEVWPNV…LRELNEKLME (149 aa)). Residues 322–337 (SHLSGSSLGKATQASK) are compositionally biased toward polar residues. A Phosphoserine modification is found at S377. Phosphothreonine is present on T433. Residues 435–444 (SESSAWESVS) show a composition bias toward low complexity. Basic and acidic residues predominate over residues 500 to 517 (KREEAADRSSEAGSRVRE). At S509 the chain carries Phosphoserine. Positions 600–619 (VGSENKEEVVELSKGEDSAL) are enriched in basic and acidic residues. The segment covering 877–890 (DEDDGVGDGDEDTD) has biased composition (acidic residues). 2 stretches are compositionally biased toward polar residues: residues 897–914 (RYSSRSNSQKPETDTCSS) and 952–966 (SDWSGSSRGKYTRSS). Residues 974–983 (KSSSYKFSKS) show a composition bias toward low complexity. S985 carries the post-translational modification Phosphoserine. The span at 990–999 (TSSYHEANGN) shows a compositional bias: polar residues. The span at 1000-1012 (SVRSTSRFSSSST) shows a compositional bias: low complexity. S1036 carries the phosphoserine modification. 3 stretches are compositionally biased toward basic and acidic residues: residues 1044–1056 (RTPESSEREESPE), 1064–1079 (RSRDWEDVEESSKSDF), and 1094–1111 (RSEEEGEKERTENREEGR). A compositionally biased stretch (acidic residues) spans 1126 to 1135 (REEEEEMDDE).

This sequence belongs to the protein-tyrosine phosphatase family. Non-receptor class dual specificity subfamily.

The protein resides in the cytoplasm. The protein localises to the myofibril. It is found in the sarcomere. Its function is as follows. May be required for myofiber maturation. The chain is Serine/threonine/tyrosine-interacting-like protein 2 from Homo sapiens (Human).